A 345-amino-acid polypeptide reads, in one-letter code: Lysine-specific demethylase JMJ32 (345 aa).

The 194-residue stretch at 122–315 folds into the JmjC domain; it reads GYLQQQNDCF…IKYAYFNFLQ (194 aa). Fe cation-binding residues include His174, Asp176, and His281.

The protein belongs to the JARID1 histone demethylase family. Fe(2+) serves as cofactor. In terms of tissue distribution, expressed ubiquitously including in vasculatures, leaves, siliques, roots and inflorescences. Present in the root meristem. Accumulates in cotyledons and root tips of young seedlings.

Its subcellular location is the nucleus. The protein localises to the cytoplasm. The protein resides in the endoplasmic reticulum. It catalyses the reaction N(6),N(6),N(6)-trimethyl-L-lysyl(27)-[histone H3] + 2-oxoglutarate + O2 = N(6),N(6)-dimethyl-L-lysyl(27)-[histone H3] + formaldehyde + succinate + CO2. The catalysed reaction is N(6),N(6)-dimethyl-L-lysyl(27)-[histone H3] + 2-oxoglutarate + O2 = N(6)-methyl-L-lysyl(27)-[histone H3] + formaldehyde + succinate + CO2. It carries out the reaction N(6),N(6),N(6)-trimethyl-L-lysyl(27)-[histone H3] + 2 2-oxoglutarate + 2 O2 = N(6)-methyl-L-lysyl(27)-[histone H3] + 2 formaldehyde + 2 succinate + 2 CO2. Histone demethylase that demethylates 'Lys-27' (H3K27me) of histone H3 with a specific activity for H3K27me3 and H3K27me2, and involved in the regulation of gene expression. No activity on H3K27me1. Together with JMJ30, regulates the flowering-repressor FLOWERING LOCUS C (FLC) locus by removing the repressive histone modification H3 lysine 27 trimethylation (H3K27me3), especially at elevated temperatures (e.g. 29 degrees Celsius), thus preventing extreme precocious flowering. JMJ30 and JMJ32 are regulators involved in the integration of abscisic acid (ABA) and brassinosteroids (BR) signaling pathways. Together with JMJ30, controls ABA-mediated growth arrest during the post-germination stage in unfavorable conditions, and responses to ABA during root development, via the removal of repressive histone mark (H3K27me3) from the SnRK2.8 promoter, thus promoting SnRK2.8 expression and subsequent kinase-dependent ABI3 activation. In addition, removes the repressive histone marks (H3K27me3) from the BZR1 locus in response to stress and ABA, thus activating the BR signaling pathway which, in turn, inhibits the ABA signaling pathway. The chain is Lysine-specific demethylase JMJ32 from Arabidopsis thaliana (Mouse-ear cress).